The following is a 374-amino-acid chain: Queuine tRNA-ribosyltransferase (374 aa).

The active-site Proton acceptor is the aspartate 89. Substrate-binding positions include 89–93, aspartate 143, glutamine 187, and glycine 214; that span reads DSGGF. The RNA binding stretch occupies residues 245–251; the sequence is GVGKPED. The active-site Nucleophile is aspartate 264. The tract at residues 269-273 is RNA binding; important for wobble base 34 recognition; the sequence is TRNAR. Residues cysteine 302, cysteine 304, cysteine 307, and histidine 333 each coordinate Zn(2+).

The protein belongs to the queuine tRNA-ribosyltransferase family. As to quaternary structure, homodimer. Within each dimer, one monomer is responsible for RNA recognition and catalysis, while the other monomer binds to the replacement base PreQ1. It depends on Zn(2+) as a cofactor.

The catalysed reaction is 7-aminomethyl-7-carbaguanine + guanosine(34) in tRNA = 7-aminomethyl-7-carbaguanosine(34) in tRNA + guanine. Its pathway is tRNA modification; tRNA-queuosine biosynthesis. In terms of biological role, catalyzes the base-exchange of a guanine (G) residue with the queuine precursor 7-aminomethyl-7-deazaguanine (PreQ1) at position 34 (anticodon wobble position) in tRNAs with GU(N) anticodons (tRNA-Asp, -Asn, -His and -Tyr). Catalysis occurs through a double-displacement mechanism. The nucleophile active site attacks the C1' of nucleotide 34 to detach the guanine base from the RNA, forming a covalent enzyme-RNA intermediate. The proton acceptor active site deprotonates the incoming PreQ1, allowing a nucleophilic attack on the C1' of the ribose to form the product. After dissociation, two additional enzymatic reactions on the tRNA convert PreQ1 to queuine (Q), resulting in the hypermodified nucleoside queuosine (7-(((4,5-cis-dihydroxy-2-cyclopenten-1-yl)amino)methyl)-7-deazaguanosine). The chain is Queuine tRNA-ribosyltransferase from Shewanella sp. (strain W3-18-1).